We begin with the raw amino-acid sequence, 646 residues long: Long-chain fatty acid transport protein 1 (646 aa).

Residues 1–13 (MRTPGAGTASVAS) are Extracellular-facing. The chain crosses the membrane as a helical span at residues 14-34 (LGLLWLLGLPWTWSAAAAFGV). The Cytoplasmic portion of the chain corresponds to 35-646 (YVGSGGWRFL…ARICAGDFSL (612 aa)). The interval 191–475 (EVSEQLGKSL…YVSDSATNKK (285 aa)) is sufficient for oligomerization. 246–257 (YIYTSGTTGLPK) contributes to the AMP binding site.

This sequence belongs to the ATP-dependent AMP-binding enzyme family. As to quaternary structure, self-associates. May function as a homodimer. Interacts with EPRS1; mediates the translocation of SLC27A1 from the cytoplasm to the plasma membrane thereby increasing the uptake of long-chain fatty acids. Interacts with DGAT2 and this interaction is enhanced in the presence of ZFYVE1. As to expression, expressed in muscle.

The protein localises to the cell membrane. Its subcellular location is the endomembrane system. It is found in the cytoplasm. The enzyme catalyses a fatty acid(in) = a fatty acid(out). It catalyses the reaction (9Z)-octadecenoate(out) = (9Z)-octadecenoate(in). The catalysed reaction is hexadecanoate(out) = hexadecanoate(in). It carries out the reaction (5Z,8Z,11Z,14Z)-eicosatetraenoate(out) = (5Z,8Z,11Z,14Z)-eicosatetraenoate(in). The enzyme catalyses (9Z,12Z)-octadecadienoate(out) = (9Z,12Z)-octadecadienoate(in). It catalyses the reaction a long-chain fatty acid + ATP + CoA = a long-chain fatty acyl-CoA + AMP + diphosphate. The catalysed reaction is (5Z,8Z,11Z,14Z)-eicosatetraenoate + ATP + CoA = (5Z,8Z,11Z,14Z)-eicosatetraenoyl-CoA + AMP + diphosphate. It carries out the reaction a very long-chain fatty acid + ATP + CoA = a very long-chain fatty acyl-CoA + AMP + diphosphate. The enzyme catalyses tetracosanoate + ATP + CoA = tetracosanoyl-CoA + AMP + diphosphate. Inhibited by Triacsin C. Its function is as follows. Mediates the import of long-chain fatty acids (LCFA) into the cell by facilitating their transport at the plasma membrane. Also functions as an acyl-CoA ligase catalyzing the ATP-dependent formation of fatty acyl-CoA using LCFA and very-long-chain fatty acids (VLCFA) as substrates, which prevents fatty acid efflux from cells and might drive more fatty acid uptake. May act directly as a bona fide transporter, or alternatively, in a cytoplasmic or membrane-associated multimeric protein complex to trap and draw fatty acids towards accumulation. Plays a pivotal role in regulating available LCFA substrates from exogenous sources in tissues undergoing high levels of beta-oxidation or triglyceride synthesis. May be involved in regulation of cholesterol metabolism. Probably involved in fatty acid transport across the blood barrier. The protein is Long-chain fatty acid transport protein 1 of Rattus norvegicus (Rat).